A 601-amino-acid chain; its full sequence is Polypeptide N-acetylgalactosaminyltransferase 11 (601 aa).

The Cytoplasmic segment spans residues 1–7 (MGSAALR). Residues 8–28 (CFCYGCLFTSVTWTLLLFIYF) traverse the membrane as a helical; Signal-anchor for type II membrane protein segment. Residues Asn-29 and Asn-202 are each glycosylated (N-linked (GlcNAc...) asparagine). The Lumenal portion of the chain corresponds to 29–601 (NFSEESQGFR…SPSQQWHLEN (573 aa)). The segment at 143 to 254 (LPMASIVICF…EMWLQPLLAP (112 aa)) is catalytic subdomain A. A catalytic subdomain B region spans residues 312–374 (PFRSPTMAGG…PCSRVGHIFR (63 aa)). The 132-residue stretch at 469–600 (RPKILQRGRL…GSPSQQWHLE (132 aa)) folds into the Ricin B-type lectin domain. Cys-486 and Cys-505 are disulfide-bonded. Asn-508 is a glycosylation site (N-linked (GlcNAc...) asparagine). Disulfide bonds link Cys-529–Cys-546 and Cys-571–Cys-589.

It belongs to the glycosyltransferase 2 family. GalNAc-T subfamily. In terms of assembly, interacts with notch1. It depends on Mn(2+) as a cofactor. Ca(2+) serves as cofactor.

It is found in the golgi apparatus membrane. It catalyses the reaction L-seryl-[protein] + UDP-N-acetyl-alpha-D-galactosamine = a 3-O-[N-acetyl-alpha-D-galactosaminyl]-L-seryl-[protein] + UDP + H(+). The enzyme catalyses L-threonyl-[protein] + UDP-N-acetyl-alpha-D-galactosamine = a 3-O-[N-acetyl-alpha-D-galactosaminyl]-L-threonyl-[protein] + UDP + H(+). The protein operates within protein modification; protein glycosylation. Polypeptide N-acetylgalactosaminyltransferase that catalyzes the initiation of protein O-linked glycosylation and is involved in left/right asymmetry by mediating O-glycosylation of NOTCH1. O-glycosylation of NOTCH1 promotes activation of NOTCH1, modulating the balance between motile and immotile (sensory) cilia at the left-right organiser (LRO). Polypeptide N-acetylgalactosaminyltransferases catalyze the transfer of an N-acetyl-D-galactosamine residue to a serine or threonine residue on the protein receptor. The polypeptide is Polypeptide N-acetylgalactosaminyltransferase 11 (galnt11) (Xenopus tropicalis (Western clawed frog)).